Consider the following 513-residue polypeptide: Putative thymidine phosphorylase (513 aa).

The protein belongs to the thymidine/pyrimidine-nucleoside phosphorylase family. Type 2 subfamily.

It catalyses the reaction thymidine + phosphate = 2-deoxy-alpha-D-ribose 1-phosphate + thymine. The polypeptide is Putative thymidine phosphorylase (Bradyrhizobium diazoefficiens (strain JCM 10833 / BCRC 13528 / IAM 13628 / NBRC 14792 / USDA 110)).